A 793-amino-acid chain; its full sequence is Phenylalanine--tRNA ligase beta subunit (793 aa).

One can recognise a tRNA-binding domain in the interval 39 to 148; the sequence is AGQFTHVIVA…DEAPIGMDLR (110 aa). Residues 401–477 form the B5 domain; the sequence is PGTVSFLFDT…RLYGYDKLQA (77 aa). Positions 455, 461, 464, and 465 each coordinate Mg(2+). The FDX-ACB domain maps to 698 to 792; that stretch reads SKYPQIRRDL…LENEFSILLR (95 aa).

The protein belongs to the phenylalanyl-tRNA synthetase beta subunit family. Type 1 subfamily. Tetramer of two alpha and two beta subunits. The cofactor is Mg(2+).

Its subcellular location is the cytoplasm. The catalysed reaction is tRNA(Phe) + L-phenylalanine + ATP = L-phenylalanyl-tRNA(Phe) + AMP + diphosphate + H(+). This is Phenylalanine--tRNA ligase beta subunit from Legionella pneumophila (strain Paris).